The chain runs to 739 residues: DNA ligase (739 aa).

NAD(+) contacts are provided by residues 34–38 (DADYD), 83–84 (SL), and Glu-117. The N6-AMP-lysine intermediate role is filled by Lys-119. The NAD(+) site is built by Arg-140, Glu-175, Lys-291, and Lys-315. Residues Cys-420, Cys-423, Cys-438, and Cys-444 each contribute to the Zn(2+) site. A BRCT domain is found at 660–739 (ADDSPVAGKT…DGWLDLIGQA (80 aa)).

This sequence belongs to the NAD-dependent DNA ligase family. LigA subfamily. Requires Mg(2+) as cofactor. Mn(2+) serves as cofactor.

It carries out the reaction NAD(+) + (deoxyribonucleotide)n-3'-hydroxyl + 5'-phospho-(deoxyribonucleotide)m = (deoxyribonucleotide)n+m + AMP + beta-nicotinamide D-nucleotide.. In terms of biological role, DNA ligase that catalyzes the formation of phosphodiester linkages between 5'-phosphoryl and 3'-hydroxyl groups in double-stranded DNA using NAD as a coenzyme and as the energy source for the reaction. It is essential for DNA replication and repair of damaged DNA. The protein is DNA ligase of Ruegeria sp. (strain TM1040) (Silicibacter sp.).